A 399-amino-acid chain; its full sequence is L-methionine gamma-lyase (399 aa).

Pyridoxal 5'-phosphate contacts are provided by residues 59 to 61 and 89 to 90; these read YTR and GI. Tyr114 lines the substrate pocket. 209 to 211 provides a ligand contact to pyridoxal 5'-phosphate; that stretch reads SAT. Lys212 carries the post-translational modification N6-(pyridoxal phosphate)lysine. Position 376 (Arg376) interacts with substrate.

Belongs to the trans-sulfuration enzymes family. L-methionine gamma-lyase subfamily. In terms of assembly, homotetramer; dimer of active dimers. Pyridoxal 5'-phosphate serves as cofactor.

The enzyme catalyses L-methionine + H2O = methanethiol + 2-oxobutanoate + NH4(+). It catalyses the reaction L-homocysteine + H2O = 2-oxobutanoate + hydrogen sulfide + NH4(+) + H(+). In terms of biological role, catalyzes the alpha,gamma-elimination of L-methionine to produce methanethiol, 2-oxobutanoate and ammonia; methanethiol (methyl mercaptan) is considered to be one of the main causes of the oral malodor in periodontal disease and may also play a role in the pathogenicity of P.gingivalis in that disease. Is also able to catalyze the alpha,gamma-elimination of L-homocysteine. This chain is L-methionine gamma-lyase, found in Porphyromonas gingivalis (strain ATCC BAA-308 / W83).